The chain runs to 728 residues: MAMFNGDVEDGGRGDASCGKDLKRYLMLMGVVALVVLFGAFIYRQSSGGLRLGAMLEQMGRGTGPAVNVPVQQGGPSAAVNPAMSVPAGARVAPPSAAGAIATMPPMVDFGPAPIGAGGPFSSVVTLLRNSVVAVTASSANGQAMPDPLGLANPDGLPHFANPATRSVENIGTGVIVRNDGFIVTNYHVVRGANSVFVTVQDDVGSTRYSAEIIKMDEALDLALLKVAPKTPLTAAVLGDSDGVQVADEVIAIGTPFGLDMTVSRGIISAKRKSMVIEGVTHSNLLQTDAAINQGNSGGPLVISNGTVVGINTAIYTPNGAFAGIGFAVPSNQARLFILDEVGWLPTSTAEGASMGLVAMQRPMGGGVGAAGPAIFAGTRAPHTDGRQNMDCTTCHDLIPAGNGRPAPMMPIAAPIPPPPIPMGAVSPHTDGRQNMNCANCHQMLGGAAPIAAPGLGGGAYRFAQPPGSLAINIQGPRGGQSTAAGTGRVTLLGAALTPMSQRLGAQTGVPVGRGVFISGVTPNTPAATAGLRPGDVLLKVDGRPVRLPEEVSAIMVEMHAGRSVRLGVLRDGDVRNMTLVAGPAGLAAAAVQAPAIADMAQPPMGGMAPTAPGMVAVPGGPAVMPKPPTEFNWLGMEIETFQAPRPITGVPGAVPVPGAKGAQVAEVLVGSRAAVAGLQANDLILEVNNRPVAGPARLDAAIKGATNAGQQILLKVNRNGQEFWIVL.

The Cytoplasmic portion of the chain corresponds to 1–21 (MAMFNGDVEDGGRGDASCGKD). A helical transmembrane segment spans residues 22-42 (LKRYLMLMGVVALVVLFGAFI). The Lumenal segment spans residues 43-728 (YRQSSGGLRL…RNGQEFWIVL (686 aa)). Catalysis depends on charge relay system residues His-188, Asp-221, and Ser-297. The MCR (magnetochrome) 1 motif lies at 375–398 (IFAGTRAPHTDGRQNMDCTTCHDL). Residues Cys-392, Cys-395, His-396, Cys-438, Cys-441, and His-442 each contribute to the heme site. Residues 421 to 444 (IPMGAVSPHTDGRQNMNCANCHQM) carry the MCR 2 motif. 2 consecutive PDZ domains span residues 471–573 (AINI…LRDG) and 622–721 (PAVM…NRNG).

This sequence in the N-terminal section; belongs to the peptidase S1C family. As to quaternary structure, might interact with MamB via PDZ1. The cofactor is heme. Subject to autocatalytic cleavage; cleavage also requires MamO.

The protein resides in the magnetosome membrane. Its activity is regulated as follows. Autoproteolysis is stimulated by exogenous substrates or peptides that bind to its PDZ domains; may be stimulated by an environmental cue in vivo. Protease activity is tightly regulated; increasing its activity decreases substrate levels and disturbs biomineralization. Its function is as follows. Acts at 2 distinct steps of magnetosome formation; required for correct localization of proteins to the magnetosome while the protease activity is required for maturation of small magnetite crystals into larger, functional ones. The 2 functions are separable by mutation. Probably cleaves at least itself, MamO and MamP; cleavage requires the putative transport domain of MamO. Involved in localization of some proteins (at least MamA, MamC, MamF, MamI and MamJ) to the magnetosome. This chain is Magnetosome formation protease MamE (mamE), found in Paramagnetospirillum magneticum (strain ATCC 700264 / AMB-1) (Magnetospirillum magneticum).